A 1729-amino-acid chain; its full sequence is RNA-directed RNA polymerase (1729 aa).

Positions 59-232 (HPMSLAVHPH…FHEPWQLYWL (174 aa)) constitute an Alphavirus-like MT domain. Disordered regions lie at residues 528 to 619 (NSNA…TPSP) and 635 to 663 (STSRASSPSPRRTVVSPRQPEAQNETLGR). Composition is skewed to polar residues over residues 538-567 (QQDQPSVTQGPDEAAQTQTPTATSMVTNSV) and 586-617 (FPTTVRASFEQPSSTRAPETSENNTPAESVTP). Positions 635-652 (STSRASSPSPRRTVVSPR) are enriched in low complexity. One can recognise a Fe2OG dioxygenase domain in the interval 741–834 (SYDHCLIQRY…RVSITFRNKT (94 aa)). Fe cation contacts are provided by His-759, Asp-761, and His-816. A 2-oxoglutarate-binding site is contributed by Arg-825. A disordered region spans residues 841 to 862 (SAPDMNPVEQPGASAGQLTGPL). The 155-residue stretch at 957-1111 (LQNADLTWKT…VFKQYCGYYI (155 aa)) folds into the (+)RNA virus helicase ATP-binding domain. Residues 1112–1247 (NCTHRNKQDL…VITERAAAET (136 aa)) form the (+)RNA virus helicase C-terminal domain. In terms of domain architecture, RdRp catalytic spans 1492–1599 (RPAFASDFEA…DQVPVEKTGF (108 aa)).

The protein belongs to the potexvirus/carlavirus RNA replication protein family. Fe(2+) serves as cofactor.

The enzyme catalyses RNA(n) + a ribonucleoside 5'-triphosphate = RNA(n+1) + diphosphate. It carries out the reaction ATP + H2O = ADP + phosphate + H(+). RNA replication. The central part of this protein possibly functions as an ATP-binding helicase. In Lolium latent virus (isolate Lolium/USA/US1/-) (LoLV), this protein is RNA-directed RNA polymerase (ORF1).